We begin with the raw amino-acid sequence, 451 residues long: Ribosomal protein uS12 methylthiotransferase RimO (451 aa).

An MTTase N-terminal domain is found at proline 17–proline 127. Positions 26, 62, 91, 160, 164, and 167 each coordinate [4Fe-4S] cluster. Residues leucine 146–glutamate 383 form the Radical SAM core domain. The 66-residue stretch at lysine 386–valine 451 folds into the TRAM domain.

This sequence belongs to the methylthiotransferase family. RimO subfamily. [4Fe-4S] cluster is required as a cofactor.

It is found in the cytoplasm. The catalysed reaction is L-aspartate(89)-[ribosomal protein uS12]-hydrogen + (sulfur carrier)-SH + AH2 + 2 S-adenosyl-L-methionine = 3-methylsulfanyl-L-aspartate(89)-[ribosomal protein uS12]-hydrogen + (sulfur carrier)-H + 5'-deoxyadenosine + L-methionine + A + S-adenosyl-L-homocysteine + 2 H(+). Its function is as follows. Catalyzes the methylthiolation of an aspartic acid residue of ribosomal protein uS12. This chain is Ribosomal protein uS12 methylthiotransferase RimO, found in Cellvibrio japonicus (strain Ueda107) (Pseudomonas fluorescens subsp. cellulosa).